We begin with the raw amino-acid sequence, 140 residues long: HTH-type transcriptional regulator LysM (140 aa).

An HTH asnC-type domain is found at 4–67; the sequence is VDESDLKILE…ELENEIRAIV (64 aa). A DNA-binding region (H-T-H motif) is located at residues 23–42; the sequence is YTSIAKELKISEAAVRKRIE.

As to quaternary structure, homotetramer.

It is found in the cytoplasm. It functions in the pathway amino-acid biosynthesis; L-lysine biosynthesis via AAA pathway [regulation]. Its function is as follows. In the absence or at low concentrations of lysine, activates the biosynthesis of this amino acid via the alpha-aminoadipate (AAA) pathway. This is HTH-type transcriptional regulator LysM (lysM) from Sulfurisphaera tokodaii (strain DSM 16993 / JCM 10545 / NBRC 100140 / 7) (Sulfolobus tokodaii).